The following is a 274-amino-acid chain: MSAPPRQKRLTPTTIAALKHQRPIVSLTAYTTPMARLMDAHCDLLLVGDSLGMVLYGLDTTVGVTLEMMIAHGQAVLRGVNRACVIIDMPFGSYQESREQAFRNAARIMKETGCDGIKLEGGTEMAETVAFLVERGIPVLGHVGLMPQQVNTSGGYRSKGHDEAEADKIRADATAIAKAGAFALVIEGTVEPLAREITQTLSVPTIGIGASPACDGQILVSDDMLGLFNDFKPRFVKHYAELAGVISKAVEDYATEVKARQFPGPEHTFQPRKS.

Residues D49 and D88 each coordinate Mg(2+). 3-methyl-2-oxobutanoate-binding positions include 49–50 (DS), D88, and K118. E120 contacts Mg(2+). E187 (proton acceptor) is an active-site residue.

It belongs to the PanB family. Homodecamer; pentamer of dimers. The cofactor is Mg(2+).

The protein resides in the cytoplasm. It carries out the reaction 3-methyl-2-oxobutanoate + (6R)-5,10-methylene-5,6,7,8-tetrahydrofolate + H2O = 2-dehydropantoate + (6S)-5,6,7,8-tetrahydrofolate. It functions in the pathway cofactor biosynthesis; (R)-pantothenate biosynthesis; (R)-pantoate from 3-methyl-2-oxobutanoate: step 1/2. Functionally, catalyzes the reversible reaction in which hydroxymethyl group from 5,10-methylenetetrahydrofolate is transferred onto alpha-ketoisovalerate to form ketopantoate. The polypeptide is 3-methyl-2-oxobutanoate hydroxymethyltransferase (Allorhizobium ampelinum (strain ATCC BAA-846 / DSM 112012 / S4) (Agrobacterium vitis (strain S4))).